Here is a 750-residue protein sequence, read N- to C-terminus: Photosystem I P700 chlorophyll a apoprotein A1 (750 aa).

A run of 8 helical transmembrane segments spans residues Val-70–Ala-93, Leu-156–His-179, Leu-195–Leu-219, Thr-291–Tyr-309, Trp-346–Tyr-369, Leu-385–Val-411, Ala-433–His-455, and Phe-531–Leu-549. [4Fe-4S] cluster is bound by residues Cys-573 and Cys-582. 2 helical membrane passes run His-589–Trp-610 and Leu-664–Phe-686. His-675 contacts chlorophyll a'. Residues Met-683 and Tyr-691 each coordinate chlorophyll a. Trp-692 serves as a coordination point for phylloquinone. Residues Ala-724–Ala-744 form a helical membrane-spanning segment.

Belongs to the PsaA/PsaB family. As to quaternary structure, the PsaA/B heterodimer binds the P700 chlorophyll special pair and subsequent electron acceptors. PSI consists of a core antenna complex that captures photons, and an electron transfer chain that converts photonic excitation into a charge separation. The eukaryotic PSI reaction center is composed of at least 11 subunits. Requires P700 is a chlorophyll a/chlorophyll a' dimer, A0 is one or more chlorophyll a, A1 is one or both phylloquinones and FX is a shared 4Fe-4S iron-sulfur center. as cofactor.

Its subcellular location is the plastid. It localises to the chloroplast thylakoid membrane. The catalysed reaction is reduced [plastocyanin] + hnu + oxidized [2Fe-2S]-[ferredoxin] = oxidized [plastocyanin] + reduced [2Fe-2S]-[ferredoxin]. Its function is as follows. PsaA and PsaB bind P700, the primary electron donor of photosystem I (PSI), as well as the electron acceptors A0, A1 and FX. PSI is a plastocyanin-ferredoxin oxidoreductase, converting photonic excitation into a charge separation, which transfers an electron from the donor P700 chlorophyll pair to the spectroscopically characterized acceptors A0, A1, FX, FA and FB in turn. Oxidized P700 is reduced on the lumenal side of the thylakoid membrane by plastocyanin. The protein is Photosystem I P700 chlorophyll a apoprotein A1 of Helianthus annuus (Common sunflower).